The following is a 197-amino-acid chain: Holliday junction resolvase RecU (197 aa).

The disordered stretch occupies residues 1–21 (MVNYPSGVRAGGYPQKKKNQN). Residues Thr-82, Asp-84, Asp-97, and Gln-116 each coordinate Mg(2+).

It belongs to the RecU family. Mg(2+) serves as cofactor.

It is found in the cytoplasm. It carries out the reaction Endonucleolytic cleavage at a junction such as a reciprocal single-stranded crossover between two homologous DNA duplexes (Holliday junction).. In terms of biological role, endonuclease that resolves Holliday junction intermediates in genetic recombination. Cleaves mobile four-strand junctions by introducing symmetrical nicks in paired strands. Promotes annealing of linear ssDNA with homologous dsDNA. Required for DNA repair, homologous recombination and chromosome segregation. This is Holliday junction resolvase RecU from Oenococcus oeni (strain ATCC BAA-331 / PSU-1).